The chain runs to 586 residues: Phosphomethylpyrimidine synthase (586 aa).

The segment at 1-59 (MKQSVSAEQIELKSSLPGSKKVYVDGPREGMKVPMREIEQSDTNGVPNPPIRVYDTSGP) is disordered. The span at 22 to 39 (VYVDGPREGMKVPMREIE) shows a compositional bias: basic and acidic residues. Residues asparagine 193, methionine 222, tyrosine 251, histidine 287, 307–309 (SRG), 348–351 (DGLR), and glutamate 387 each bind substrate. Histidine 391 lines the Zn(2+) pocket. Residue tyrosine 414 participates in substrate binding. Histidine 455 is a binding site for Zn(2+). The [4Fe-4S] cluster site is built by cysteine 535, cysteine 538, and cysteine 543.

The protein belongs to the ThiC family. [4Fe-4S] cluster serves as cofactor.

It carries out the reaction 5-amino-1-(5-phospho-beta-D-ribosyl)imidazole + S-adenosyl-L-methionine = 4-amino-2-methyl-5-(phosphooxymethyl)pyrimidine + CO + 5'-deoxyadenosine + formate + L-methionine + 3 H(+). It functions in the pathway cofactor biosynthesis; thiamine diphosphate biosynthesis. In terms of biological role, catalyzes the synthesis of the hydroxymethylpyrimidine phosphate (HMP-P) moiety of thiamine from aminoimidazole ribotide (AIR) in a radical S-adenosyl-L-methionine (SAM)-dependent reaction. The polypeptide is Phosphomethylpyrimidine synthase (Bacillus cereus (strain ZK / E33L)).